The primary structure comprises 418 residues: F420-non-reducing hydrogenase vhu subunit A (418 aa).

Ni(2+) is bound by residues Cys61 and Cys64.

The protein belongs to the [NiFe]/[NiFeSe] hydrogenase large subunit family. In terms of assembly, the F420-non-reducing hydrogenase vhu is composed of four subunits; VhuA, VhuD, VhuG and VhuU. Ni(2+) is required as a cofactor.

The polypeptide is F420-non-reducing hydrogenase vhu subunit A (vhuA) (Methanocaldococcus jannaschii (strain ATCC 43067 / DSM 2661 / JAL-1 / JCM 10045 / NBRC 100440) (Methanococcus jannaschii)).